A 201-amino-acid chain; its full sequence is Recombination protein RecR (201 aa).

Residues 59–74 (CEICGNMDTENICCIC) form a C4-type zinc finger. The Toprim domain maps to 82 to 177 (SVIAVVETVA…KISRLASGIP (96 aa)).

Belongs to the RecR family.

Its function is as follows. May play a role in DNA repair. It seems to be involved in an RecBC-independent recombinational process of DNA repair. It may act with RecF and RecO. The protein is Recombination protein RecR of Rickettsia felis (strain ATCC VR-1525 / URRWXCal2) (Rickettsia azadi).